A 256-amino-acid polypeptide reads, in one-letter code: 3-dehydroquinate dehydratase (256 aa).

Residues 46–48 (EWR) and Arg-82 contribute to the 3-dehydroquinate site. His-144 functions as the Proton donor/acceptor in the catalytic mechanism. The active-site Schiff-base intermediate with substrate is the Lys-171. Positions 213, 232, and 236 each coordinate 3-dehydroquinate.

Belongs to the type-I 3-dehydroquinase family. Homodimer.

It carries out the reaction 3-dehydroquinate = 3-dehydroshikimate + H2O. The protein operates within metabolic intermediate biosynthesis; chorismate biosynthesis; chorismate from D-erythrose 4-phosphate and phosphoenolpyruvate: step 3/7. Involved in the third step of the chorismate pathway, which leads to the biosynthesis of aromatic amino acids. Catalyzes the cis-dehydration of 3-dehydroquinate (DHQ) and introduces the first double bond of the aromatic ring to yield 3-dehydroshikimate. The chain is 3-dehydroquinate dehydratase from Shouchella clausii (strain KSM-K16) (Alkalihalobacillus clausii).